We begin with the raw amino-acid sequence, 135 residues long: Ribonuclease P protein component (135 aa).

Belongs to the RnpA family. In terms of assembly, consists of a catalytic RNA component (M1 or rnpB) and a protein subunit.

The catalysed reaction is Endonucleolytic cleavage of RNA, removing 5'-extranucleotides from tRNA precursor.. Functionally, RNaseP catalyzes the removal of the 5'-leader sequence from pre-tRNA to produce the mature 5'-terminus. It can also cleave other RNA substrates such as 4.5S RNA. The protein component plays an auxiliary but essential role in vivo by binding to the 5'-leader sequence and broadening the substrate specificity of the ribozyme. This Saccharophagus degradans (strain 2-40 / ATCC 43961 / DSM 17024) protein is Ribonuclease P protein component.